We begin with the raw amino-acid sequence, 444 residues long: MHILVVSVNYRTAPVEFREKLTFQAAELEQAMTTLQNQKSVLENVIVSTCNRTEVYAVVDQLHTGRYYIKKFLADWFQLEIEEVAPYLTIFEQDGAIDHLFRVTCGLDSMVVGETQILGQIKDSFLEAQQVKATGTIFNELFKQVITLAKRAHSETTIGESAMSVSYAAVELGKKIFGELTDCHVLILGAGKMGELALQNLYGSGARKVTVMNRTLSKAEIMAEKYMGHAKPLSELQCALLEADILISSTGASDYVITKEMMTKVEKMRSGRPLFMVDIAVPRDIDPAIDELEGSFLYDIDDLQGVVEANRAERLKEAEKIQFMIEEEIVVFKTWLSTLGVVPLISALRDKALAIQSETMESLERKIPTLSDRERKVISKHTKSIINQLLKDPILVAKEIAAEEGADEKLALFAKIFDLEMEDVESRAEEVEHKRAWTPSVPSL.

Residues 49–52, Ser-109, 114–116, and Gln-120 contribute to the substrate site; these read TCNR and ETQ. Residue Cys-50 is the Nucleophile of the active site. 189-194 is a binding site for NADP(+); the sequence is GAGKMG.

This sequence belongs to the glutamyl-tRNA reductase family. As to quaternary structure, homodimer.

The catalysed reaction is (S)-4-amino-5-oxopentanoate + tRNA(Glu) + NADP(+) = L-glutamyl-tRNA(Glu) + NADPH + H(+). The protein operates within porphyrin-containing compound metabolism; protoporphyrin-IX biosynthesis; 5-aminolevulinate from L-glutamyl-tRNA(Glu): step 1/2. Functionally, catalyzes the NADPH-dependent reduction of glutamyl-tRNA(Glu) to glutamate 1-semialdehyde (GSA). The chain is Glutamyl-tRNA reductase from Bacillus cereus (strain AH187).